A 183-amino-acid polypeptide reads, in one-letter code: Holliday junction branch migration complex subunit RuvA (183 aa).

The interval 1–63 (MIVGLIGVVE…EDANLLYGFL (63 aa)) is domain I. The tract at residues 64–139 (EESEKILFER…FFIQDENRPA (76 aa)) is domain II. A region of interest (flexible linker) is located at residue alanine 139. Residues 139 to 183 (ARNEVFLALESLGFKSAEINKVLKTLKPNLSIEAAIKEALQQLRS) form a domain III region.

The protein belongs to the RuvA family. Homotetramer. Forms an RuvA(8)-RuvB(12)-Holliday junction (HJ) complex. HJ DNA is sandwiched between 2 RuvA tetramers; dsDNA enters through RuvA and exits via RuvB. An RuvB hexamer assembles on each DNA strand where it exits the tetramer. Each RuvB hexamer is contacted by two RuvA subunits (via domain III) on 2 adjacent RuvB subunits; this complex drives branch migration. In the full resolvosome a probable DNA-RuvA(4)-RuvB(12)-RuvC(2) complex forms which resolves the HJ.

It is found in the cytoplasm. The RuvA-RuvB-RuvC complex processes Holliday junction (HJ) DNA during genetic recombination and DNA repair, while the RuvA-RuvB complex plays an important role in the rescue of blocked DNA replication forks via replication fork reversal (RFR). RuvA specifically binds to HJ cruciform DNA, conferring on it an open structure. The RuvB hexamer acts as an ATP-dependent pump, pulling dsDNA into and through the RuvAB complex. HJ branch migration allows RuvC to scan DNA until it finds its consensus sequence, where it cleaves and resolves the cruciform DNA. This chain is Holliday junction branch migration complex subunit RuvA, found in Helicobacter pylori (strain HPAG1).